Reading from the N-terminus, the 102-residue chain is Monothiol glutaredoxin-S4 (102 aa).

The Glutaredoxin domain occupies Met1–Trp101. Cys21 contributes to the [2Fe-2S] cluster binding site. A Responsive for interaction with TGA factors motif is present at residues Ala99 to Leu102.

This sequence belongs to the glutaredoxin family. CC-type subfamily.

The protein resides in the cytoplasm. The protein localises to the nucleus. Its function is as follows. May only reduce GSH-thiol disulfides, but not protein disulfides. The protein is Monothiol glutaredoxin-S4 (GRXS4) of Arabidopsis thaliana (Mouse-ear cress).